We begin with the raw amino-acid sequence, 316 residues long: uncharacterized protein (316 aa).

The tract at residues 285 to 316 is disordered; sequence APEGDLGDIIEVDPSEPRSDPYRRLRTPPPGG. Residues 289–298 are compositionally biased toward acidic residues; it reads DLGDIIEVDP.

Possibly necessary for replication. This is an uncharacterized protein from Halobacterium salinarum (Halobacterium halobium).